Consider the following 245-residue polypeptide: MAFEVIPAVDMRGGKCVQLVQGVPGSEIVSLNDPLAVALDWIGKGAKTLHLVDLDGAIEGERKNAPIIEKIVQACREKGVSIQVGGGIRSFEDAASLLELGVSRIILGTAALQNPELVKQLSDAFGSSCVNVALDAKNGKISIKGWTEECAQTPVEMGREFEELGAGSLLFTNIDTEGLMQGVNPGPTRELVESVSIPVIASGGVSSLEDLKVLKQTGASGVVVGSALYTGRFTLEAAIETIRND.

The Proton acceptor role is filled by D10. D135 functions as the Proton donor in the catalytic mechanism.

This sequence belongs to the HisA/HisF family.

Its subcellular location is the cytoplasm. The catalysed reaction is 1-(5-phospho-beta-D-ribosyl)-5-[(5-phospho-beta-D-ribosylamino)methylideneamino]imidazole-4-carboxamide = 5-[(5-phospho-1-deoxy-D-ribulos-1-ylimino)methylamino]-1-(5-phospho-beta-D-ribosyl)imidazole-4-carboxamide. It participates in amino-acid biosynthesis; L-histidine biosynthesis; L-histidine from 5-phospho-alpha-D-ribose 1-diphosphate: step 4/9. The sequence is that of 1-(5-phosphoribosyl)-5-[(5-phosphoribosylamino)methylideneamino] imidazole-4-carboxamide isomerase from Methanosarcina acetivorans (strain ATCC 35395 / DSM 2834 / JCM 12185 / C2A).